We begin with the raw amino-acid sequence, 145 residues long: Large ribosomal subunit protein uL13 (145 aa).

The protein belongs to the universal ribosomal protein uL13 family. In terms of assembly, part of the 50S ribosomal subunit.

Its function is as follows. This protein is one of the early assembly proteins of the 50S ribosomal subunit, although it is not seen to bind rRNA by itself. It is important during the early stages of 50S assembly. The protein is Large ribosomal subunit protein uL13 of Staphylococcus saprophyticus subsp. saprophyticus (strain ATCC 15305 / DSM 20229 / NCIMB 8711 / NCTC 7292 / S-41).